Consider the following 229-residue polypeptide: Large ribosomal subunit protein uL1 (229 aa).

The protein belongs to the universal ribosomal protein uL1 family. In terms of assembly, part of the 50S ribosomal subunit.

Functionally, binds directly to 23S rRNA. The L1 stalk is quite mobile in the ribosome, and is involved in E site tRNA release. In terms of biological role, protein L1 is also a translational repressor protein, it controls the translation of the L11 operon by binding to its mRNA. The chain is Large ribosomal subunit protein uL1 from Rhodopseudomonas palustris (strain BisB5).